The primary structure comprises 353 residues: MTIKLAIDCMGGDHGVGVTIPAAIHFLAVHEDVEMLLVGQPDAIAAQLKRLHATANPRVHVVPASEVVSMDDPVEVALRKKKDSSMRVAINQLKEGAAQACVSAGNTGALMAVSRYVLKTLDGIDRPAIATAIPNEKGAGTTVLDLGANADCEPEHLLQFAQMASAMVSVVEQKPRPTVGLLNIGEEVIKGNEVVKQAGELLRASDLNFFGNVEGNDIFKGTTDIVVCDGFVGNVALKSTEGLAKMIGEMLRQEFSRSWFTKLLAVVALPVLTRFKRRVDHRRYNGAALLGLRGLVIKSHGSADAYAFEWAIKRAYDAAANGVIARIAQAFESHHDAAGAAPVSTSAPAADAA.

The protein belongs to the PlsX family. As to quaternary structure, homodimer. Probably interacts with PlsY.

Its subcellular location is the cytoplasm. The enzyme catalyses a fatty acyl-[ACP] + phosphate = an acyl phosphate + holo-[ACP]. Its pathway is lipid metabolism; phospholipid metabolism. Functionally, catalyzes the reversible formation of acyl-phosphate (acyl-PO(4)) from acyl-[acyl-carrier-protein] (acyl-ACP). This enzyme utilizes acyl-ACP as fatty acyl donor, but not acyl-CoA. This Ralstonia pickettii (strain 12J) protein is Phosphate acyltransferase.